Consider the following 78-residue polypeptide: Large ribosomal subunit protein bL28 (78 aa).

This sequence belongs to the bacterial ribosomal protein bL28 family.

This Clavibacter michiganensis subsp. michiganensis (strain NCPPB 382) protein is Large ribosomal subunit protein bL28.